Here is a 1053-residue protein sequence, read N- to C-terminus: 3-hydroxy-3-methylglutaryl-coenzyme A reductase (1053 aa).

The Cytoplasmic segment spans residues 1–8 (MIYKLAAR). A helical transmembrane segment spans residues 9–29 (YPIQVIAIVGILVSMAYFSFL). Over 30–203 (EALTQEDFPV…LKIASQASKT (174 aa)) the chain is Lumenal. Residue asparagine 137 is glycosylated (N-linked (GlcNAc...) asparagine). A helical transmembrane segment spans residues 204–224 (ELLIVGTAYACMLISIVSLYL). Residues 204-365 (ELLIVGTAYA…FSFFVAILTL (162 aa)) form the SSD domain. Residues 225 to 232 (KMRRLGSK) are Cytoplasmic-facing. A helical transmembrane segment spans residues 233 to 253 (FWLFFSVLLSTLFSVQFAMTL). Residues 254-258 (VRASG) lie on the Lumenal side of the membrane. A helical transmembrane segment spans residues 259 to 279 (VRISLVSLIESLPFLINVVAL). Over 280 to 320 (DKAAELTRQVITRCSVSDSHSPMHEDIAKACRNAAPPILRH) the chain is Cytoplasmic. A run of 2 helical transmembrane segments spans residues 321–341 (FSFGIVVLAIFSYCNFGIKQF) and 342–362 (FLFAAVMIYDLLLLFSFFVAI). The Cytoplasmic segment spans residues 363–417 (LTLKLEMRRYNAKDDVRKVLIEEGLSESTARHVADGNDSSATTSAGSRYFKVRYG). A helical transmembrane segment spans residues 418-438 (TKIILFIFIAFNLFELCSIPF). Over 439–526 (KHYAATSAAA…NNWSHYISAS (88 aa)) the chain is Lumenal. N-linked (GlcNAc...) asparagine glycosylation is present at asparagine 518. A helical membrane pass occupies residues 527-547 (FLSKWIVCALSLSIAVNVFLL). Topologically, residues 548–1053 (NAARLNSIKE…KSVNSRVPGR (506 aa)) are cytoplasmic. Glutamate 712 serves as the catalytic Charge relay system. 718–724 (STMRGCK) is a CoA binding site. Residues 779–781 (SRF) and 806–814 (DAMGMNMIS) each bind NADP(+). Lysine 846 serves as the catalytic Charge relay system. Position 875 to 877 (875 to 877 (VLK)) interacts with CoA. Aspartate 922 acts as the Charge relay system in catalysis. 1017–1018 (SH) lines the CoA pocket. The Proton donor role is filled by histidine 1018. Residue 1022 to 1023 (NR) participates in NADP(+) binding. Serine 1024 bears the Phosphoserine mark. Threonine 1028 is subject to Phosphothreonine. A disordered region spans residues 1028-1053 (TPAMDSSAKKPATDALKSVNSRVPGR).

The protein belongs to the HMG-CoA reductase family.

The protein resides in the endoplasmic reticulum membrane. It is found in the nucleus envelope. The catalysed reaction is (R)-mevalonate + 2 NADP(+) + CoA = (3S)-3-hydroxy-3-methylglutaryl-CoA + 2 NADPH + 2 H(+). The protein operates within metabolic intermediate biosynthesis; (R)-mevalonate biosynthesis; (R)-mevalonate from acetyl-CoA: step 3/3. In terms of biological role, part of the first module of ergosterol biosynthesis pathway that includes the early steps of the pathway, conserved across all eukaryotes, and which results in the formation of mevalonate from acetyl-coenzyme A (acetyl-CoA). Hmg1 catalyzes the reduction of hydroxymethylglutaryl-CoA (HMG-CoA) to mevalonate. The first module starts with the action of the cytosolic acetyl-CoA acetyltransferase eg10 that catalyzes the formation of acetoacetyl-CoA. The hydroxymethylglutaryl-CoA synthases erg13 then condenses acetyl-CoA with acetoacetyl-CoA to form HMG-CoA. The rate-limiting step of the early module is the reduction to mevalonate by the 3-hydroxy-3-methylglutaryl-coenzyme A (HMG-CoA) reductases hcs1. The polypeptide is 3-hydroxy-3-methylglutaryl-coenzyme A reductase (Schizosaccharomyces pombe (strain 972 / ATCC 24843) (Fission yeast)).